A 363-amino-acid chain; its full sequence is GDSL esterase/lipase At1g29670 (363 aa).

A signal peptide spans 1 to 24; the sequence is MESYLTKWCVVLVLLCFGFSVVKA. Serine 39 serves as the catalytic Nucleophile. Catalysis depends on residues aspartate 327 and histidine 330.

The protein belongs to the 'GDSL' lipolytic enzyme family.

It localises to the secreted. This is GDSL esterase/lipase At1g29670 from Arabidopsis thaliana (Mouse-ear cress).